Here is a 194-residue protein sequence, read N- to C-terminus: Small ribosomal subunit protein uS4c (194 aa).

The S4 RNA-binding domain maps to 82-143 (MRLDNILFRL…KQRSKALIQD (62 aa)).

The protein belongs to the universal ribosomal protein uS4 family. Part of the 30S ribosomal subunit. Contacts protein S5. The interaction surface between S4 and S5 is involved in control of translational fidelity.

It localises to the plastid. Its subcellular location is the chloroplast. One of the primary rRNA binding proteins, it binds directly to 16S rRNA where it nucleates assembly of the body of the 30S subunit. Its function is as follows. With S5 and S12 plays an important role in translational accuracy. The sequence is that of Small ribosomal subunit protein uS4c (rps4) from Bobartia gladiata (Sword rush-lily).